A 596-amino-acid polypeptide reads, in one-letter code: Elongation factor 4 (596 aa).

The tr-type G domain occupies 2–183 (ENIRNFSIIA…AIIKRIPAPK (182 aa)). GTP is bound by residues 14-19 (DHGKST) and 130-133 (NKID).

Belongs to the TRAFAC class translation factor GTPase superfamily. Classic translation factor GTPase family. LepA subfamily.

The protein localises to the cell inner membrane. It carries out the reaction GTP + H2O = GDP + phosphate + H(+). Functionally, required for accurate and efficient protein synthesis under certain stress conditions. May act as a fidelity factor of the translation reaction, by catalyzing a one-codon backward translocation of tRNAs on improperly translocated ribosomes. Back-translocation proceeds from a post-translocation (POST) complex to a pre-translocation (PRE) complex, thus giving elongation factor G a second chance to translocate the tRNAs correctly. Binds to ribosomes in a GTP-dependent manner. This is Elongation factor 4 from Campylobacter hominis (strain ATCC BAA-381 / DSM 21671 / CCUG 45161 / LMG 19568 / NCTC 13146 / CH001A).